A 398-amino-acid polypeptide reads, in one-letter code: Phosphoglycerate kinase (398 aa).

Residues 23–25 (DLN), arginine 38, 61–64 (HFGR), arginine 120, and arginine 153 contribute to the substrate site. ATP is bound by residues lysine 203, glutamate 325, and 355 to 358 (GGDT).

It belongs to the phosphoglycerate kinase family. In terms of assembly, monomer.

It is found in the cytoplasm. It carries out the reaction (2R)-3-phosphoglycerate + ATP = (2R)-3-phospho-glyceroyl phosphate + ADP. Its pathway is carbohydrate degradation; glycolysis; pyruvate from D-glyceraldehyde 3-phosphate: step 2/5. The polypeptide is Phosphoglycerate kinase (Sphingopyxis alaskensis (strain DSM 13593 / LMG 18877 / RB2256) (Sphingomonas alaskensis)).